The chain runs to 118 residues: DNA polymerase epsilon subunit 4 (118 aa).

Composition is skewed to low complexity over residues 1–11 (MAAAAAAGSGT) and 19–35 (GGEA…SAPG). A disordered region spans residues 1–37 (MAAAAAAGSGTPREEEAPGGEAAASQAQAPTSAPGGV). Ala2 is subject to N-acetylalanine. The residue at position 11 (Thr11) is a Phosphothreonine. Ser25 carries the phosphoserine modification.

Component of the DNA polymerase epsilon complex consisting of four subunits: the catalytic subunit POLE and the accessory subunits POLE2, POLE3 and POLE4. Interaction with POLE3 is a prerequisite for further binding with POLE and POLE2.

It localises to the nucleus. Functionally, accessory component of the DNA polymerase epsilon complex. Participates in DNA repair and in chromosomal DNA replication. The protein is DNA polymerase epsilon subunit 4 (Pole4) of Mus musculus (Mouse).